A 345-amino-acid polypeptide reads, in one-letter code: MKLVIDDACYAYREIFDHFGEITAISGSDINANSVKDADVLIIRSRTKVNQELLSGSQVKFIGSTVVGLDHIDQNYLKTKGTQFFSAQSCNSMAVAEFVISTIVNLVDELNFDYQKKTLGIIGVGNVGTKLAEKAKLMGIKTLLNDPPRQIRENLDNFVDLNTALSADIVTFHTPLTVNGEHPSYQLLNENNFHHITNKTILFNAARGGVIKETIWKKHKTLANIIDCWEDEPNINPSLQNTAYLATPHIAGHSVDAKFMGSFMVYEALCTFLGKKQDKNIRNLINLSELSIDKSNLKDTLNEIYDFQQDANAIKDVNNFEDYRRNYPIRYEWHHFKSKTVLPIA.

S45 serves as a coordination point for substrate. Residues D146 and T174 each contribute to the NAD(+) site. Residue R207 is part of the active site. D227 contacts NAD(+). E232 is a catalytic residue. Catalysis depends on H249, which acts as the Proton donor. G252 contacts NAD(+).

This sequence belongs to the D-isomer specific 2-hydroxyacid dehydrogenase family. PdxB subfamily. In terms of assembly, homodimer.

It is found in the cytoplasm. The catalysed reaction is 4-phospho-D-erythronate + NAD(+) = (R)-3-hydroxy-2-oxo-4-phosphooxybutanoate + NADH + H(+). It participates in cofactor biosynthesis; pyridoxine 5'-phosphate biosynthesis; pyridoxine 5'-phosphate from D-erythrose 4-phosphate: step 2/5. Functionally, catalyzes the oxidation of erythronate-4-phosphate to 3-hydroxy-2-oxo-4-phosphonooxybutanoate. This Ruthia magnifica subsp. Calyptogena magnifica protein is Erythronate-4-phosphate dehydrogenase.